We begin with the raw amino-acid sequence, 248 residues long: MAGHSKWANIQHRKGKQDKLRSKMFSKLAKEITVAAKMGDPDPDKNPRLRLAVKAAKAVSMPKDVIERAIKKSQGGDAEDYSEIRYEGYGPNGIAIIVETMTDNVNRTASNVRSYFTKYGGNLGTTGSVSFMFDRVGEITYKPAAGDADTVMMAAIEAGADDVESDEEGHWIYCGDTSLNEVSEALEKVLGESEEAKLVWKPQNRTNVDLETAQKLMKLIDALEEDDDVQTVTGNFDIPEDVAAKLDA.

Residues 1–21 (MAGHSKWANIQHRKGKQDKLR) form a disordered region.

It belongs to the TACO1 family.

It localises to the cytoplasm. The polypeptide is Probable transcriptional regulatory protein RHOS4_22610 (Cereibacter sphaeroides (strain ATCC 17023 / DSM 158 / JCM 6121 / CCUG 31486 / LMG 2827 / NBRC 12203 / NCIMB 8253 / ATH 2.4.1.) (Rhodobacter sphaeroides)).